The following is a 517-amino-acid chain: uncharacterized protein (517 aa).

Helical transmembrane passes span 35 to 55 (FSLI…IPGI), 81 to 101 (IAIY…GVFN), 102 to 122 (IGIS…ILKV), 135 to 155 (IITI…VAAL), 164 to 184 (VVSA…LVGT), 223 to 243 (LVIA…TVFG), 268 to 288 (FLSF…VYTA), 302 to 322 (FGIT…LIAL), 328 to 348 (IVIV…AGLN), and 352 to 372 (ASLV…MIYI).

It localises to the cell membrane. This is an uncharacterized protein from Mycoplasma pneumoniae (strain ATCC 29342 / M129 / Subtype 1) (Mycoplasmoides pneumoniae).